Reading from the N-terminus, the 137-residue chain is Putative pre-16S rRNA nuclease (137 aa).

Belongs to the YqgF nuclease family.

The protein resides in the cytoplasm. In terms of biological role, could be a nuclease involved in processing of the 5'-end of pre-16S rRNA. In Mycoplasmopsis synoviae (strain 53) (Mycoplasma synoviae), this protein is Putative pre-16S rRNA nuclease.